Consider the following 284-residue polypeptide: Origin of replication complex subunit 6 (284 aa).

This sequence belongs to the ORC6 family. Component of the origin recognition complex (ORC) composed of at least ORC1 (ORC1A or ORC1B), ORC2, ORC3, ORC4, ORC5 and ORC6. ORC is regulated in a cell-cycle and development dependent manner. It is sequentially assembled at the exit from anaphase of mitosis and disassembled as cells enter S phase. Interacts directly with ORC2, ORC3, ORC4 and ORC5. In terms of tissue distribution, follow a cell-cycle regulation with a peak at the G1/S-phase. Mostly expressed in siliques, flowers, flower buds and mature leaves, and, to a lower exent, in roots, leaves and stems.

The protein localises to the nucleus. Component of the origin recognition complex (ORC) that binds origins of replication. DNA-binding is ATP-dependent. The specific DNA sequences that define origins of replication have not been identified yet. ORC is required to assemble the pre-replication complex necessary to initiate DNA replication. This chain is Origin of replication complex subunit 6, found in Arabidopsis thaliana (Mouse-ear cress).